Reading from the N-terminus, the 435-residue chain is Ornithine decarboxylase (435 aa).

Position 76 is an N6-(pyridoxal phosphate)lysine (lysine 76). Pyridoxal 5'-phosphate is bound by residues serine 207, glycine 244, and 283-286 (EPGR). Residue 339–340 (FD) participates in substrate binding. Cysteine 368 functions as the Proton donor; shared with dimeric partner in the catalytic mechanism. Aspartate 369 contributes to the substrate binding site. Tyrosine 397 contacts pyridoxal 5'-phosphate.

It belongs to the Orn/Lys/Arg decarboxylase class-II family. Homodimer. Only the dimer is catalytically active, as the active sites are constructed of residues from both monomers. Requires pyridoxal 5'-phosphate as cofactor.

It carries out the reaction L-ornithine + H(+) = putrescine + CO2. It participates in amine and polyamine biosynthesis; putrescine biosynthesis via L-ornithine pathway; putrescine from L-ornithine: step 1/1. Inhibited by antizyme (AZ) in response to polyamine levels. AZ inhibits the assembly of the functional homodimer by binding to ODC monomers and targeting them for ubiquitin-independent proteolytic destruction by the 26S proteasome. Functionally, catalyzes the first and rate-limiting step of polyamine biosynthesis that converts ornithine into putrescine, which is the precursor for the polyamines, spermidine and spermine. Polyamines are essential for cell proliferation and are implicated in cellular processes, ranging from DNA replication to apoptosis. The sequence is that of Ornithine decarboxylase (ODC) from Panagrellus redivivus (Microworm).